Reading from the N-terminus, the 368-residue chain is uncharacterized protein (368 aa).

The 118-residue stretch at 3–120 folds into the Response regulatory domain; it reads KILLADDERI…QIISSLEEII (118 aa). Aspartate 55 is subject to 4-aspartylphosphate. An HTH araC/xylS-type domain is found at 259 to 361; sequence SKMIRLIADE…GLTPSEFRRK (103 aa). DNA-binding regions (H-T-H motif) lie at residues 278–299 and 327–351; these read WAAK…KQET and VSEI…KKYT.

In terms of processing, phosphorylated by YesM.

It is found in the cytoplasm. In terms of biological role, member of the two-component regulatory system YesM/YesN. This is an uncharacterized protein from Bacillus subtilis (strain 168).